Reading from the N-terminus, the 87-residue chain is MRLHLLLLILLLFSILLSPVRGGLGPAEGHCLNLSGVCRRDVCKVVEDQIGACRRRMKCCRAWWILMPIPTPLIMSDYQEPLKRKLK.

The N-terminal stretch at 1–22 (MRLHLLLLILLLFSILLSPVRG) is a signal peptide. Intrachain disulfides connect C31-C59, C38-C53, and C43-C60.

This sequence belongs to the beta-defensin family.

It localises to the secreted. Its function is as follows. Has antibacterial activity. The sequence is that of Beta-defensin 109 (DEFB109) from Pan troglodytes (Chimpanzee).